The sequence spans 681 residues: Calpain-C (681 aa).

The Calpain catalytic domain maps to 18 to 331 (LWEDPDFPAV…FSTMEVVYLD (314 aa)). Positions 332 to 481 (TETSNDEEML…ILGTGSFRLS (150 aa)) are domain III. Residues 482-514 (CLETQTMILLDPFPALKSTDAERCGGPKVKSVC) form a linker region. Residues 515–681 (QYEPVYMQLA…HDWIKSILSC (167 aa)) form a domain IV region. One can recognise an EF-hand domain in the interval 552 to 587 (ANIDICRQVIALQDRSGSGRITFQQFKTFMVNLKSW). Positions 565, 567, 569, and 571 each coordinate Ca(2+).

The protein belongs to the peptidase C2 family. Localized to the salivary glands in the larva.

The protein resides in the cytoplasm. In terms of biological role, not known; does not seem to have protease activity. The protein is Calpain-C of Drosophila melanogaster (Fruit fly).